The primary structure comprises 328 residues: Probable voltage-gated potassium channel subunit beta (328 aa).

Positions 21, 27, and 49 each coordinate NADP(+). The active-site Proton donor/acceptor is tyrosine 54. Residues serine 152, glutamine 178, tryptophan 207, serine 208, proline 209, leucine 210, alanine 211, lysine 218, arginine 229, glycine 285, threonine 287, glutamine 291, glutamate 294, and asparagine 295 each contribute to the NADP(+) site.

Belongs to the shaker potassium channel beta subunit family. Forms heteromultimeric complexes with potassium channel alpha subunits. In terms of tissue distribution, expressed in late-developed leaves with the highest expression in the flag leaf (at protein level).

Its function is as follows. Probable accessory potassium channel protein which modulates the activity of the pore-forming alpha subunit. This Oryza sativa subsp. japonica (Rice) protein is Probable voltage-gated potassium channel subunit beta (KOB1).